The sequence spans 403 residues: S-adenosylmethionine synthase (403 aa).

H15 contributes to the ATP binding site. A Mg(2+)-binding site is contributed by D17. E43 lines the K(+) pocket. Positions 56 and 99 each coordinate L-methionine. The flexible loop stretch occupies residues 99-109 (QSPDINQGVDR). ATP contacts are provided by residues 166-168 (DAK), 232-233 (KF), D241, 247-248 (RK), A264, and K268. L-methionine is bound at residue D241. K272 is a binding site for L-methionine.

The protein belongs to the AdoMet synthase family. In terms of assembly, homotetramer; dimer of dimers. Mg(2+) serves as cofactor. The cofactor is K(+).

Its subcellular location is the cytoplasm. The enzyme catalyses L-methionine + ATP + H2O = S-adenosyl-L-methionine + phosphate + diphosphate. Its pathway is amino-acid biosynthesis; S-adenosyl-L-methionine biosynthesis; S-adenosyl-L-methionine from L-methionine: step 1/1. In terms of biological role, catalyzes the formation of S-adenosylmethionine (AdoMet) from methionine and ATP. The overall synthetic reaction is composed of two sequential steps, AdoMet formation and the subsequent tripolyphosphate hydrolysis which occurs prior to release of AdoMet from the enzyme. The chain is S-adenosylmethionine synthase from Xanthomonas axonopodis pv. citri (strain 306).